The primary structure comprises 76 residues: DNA-directed RNA polymerase subunit epsilon (76 aa).

It belongs to the RNA polymerase subunit epsilon family. In terms of assembly, RNAP is composed of a core of 2 alpha, a beta and a beta' subunit. The core is associated with a delta subunit, and at least one of epsilon or omega. When a sigma factor is associated with the core the holoenzyme is formed, which can initiate transcription.

The catalysed reaction is RNA(n) + a ribonucleoside 5'-triphosphate = RNA(n+1) + diphosphate. In terms of biological role, a non-essential component of RNA polymerase (RNAP). The protein is DNA-directed RNA polymerase subunit epsilon of Streptococcus agalactiae serotype Ia (strain ATCC 27591 / A909 / CDC SS700).